We begin with the raw amino-acid sequence, 285 residues long: 2,3,4,5-tetrahydropyridine-2,6-dicarboxylate N-succinyltransferase (285 aa).

2 residues coordinate substrate: Arg-111 and Asp-148.

Belongs to the transferase hexapeptide repeat family. In terms of assembly, homotrimer.

It localises to the cytoplasm. It carries out the reaction (S)-2,3,4,5-tetrahydrodipicolinate + succinyl-CoA + H2O = (S)-2-succinylamino-6-oxoheptanedioate + CoA. It functions in the pathway amino-acid biosynthesis; L-lysine biosynthesis via DAP pathway; LL-2,6-diaminopimelate from (S)-tetrahydrodipicolinate (succinylase route): step 1/3. The sequence is that of 2,3,4,5-tetrahydropyridine-2,6-dicarboxylate N-succinyltransferase from Rhizobium rhizogenes (strain K84 / ATCC BAA-868) (Agrobacterium radiobacter).